We begin with the raw amino-acid sequence, 736 residues long: Subtilisin-like protease SBT4.12 (736 aa).

An N-terminal signal peptide occupies residues methionine 1–alanine 24. A propeptide spans isoleucine 25–histidine 110 (activation peptide). One can recognise an Inhibitor I9 domain in the interval valine 32 to histidine 110. The region spanning serine 114–leucine 580 is the Peptidase S8 domain. Aspartate 142 acts as the Charge relay system in catalysis. N-linked (GlcNAc...) asparagine glycosylation is present at asparagine 173. The active-site Charge relay system is histidine 197. Asparagine 220, asparagine 381, and asparagine 459 each carry an N-linked (GlcNAc...) asparagine glycan. Positions lysine 353–leucine 437 constitute a PA domain. The Charge relay system role is filled by serine 519. Asparagine 601, asparagine 649, and asparagine 659 each carry an N-linked (GlcNAc...) asparagine glycan.

The protein belongs to the peptidase S8 family. The C-terminal propeptide is autocleaved. As to expression, specifically expressed in root stele of the root hair zone.

It localises to the secreted. This is Subtilisin-like protease SBT4.12 from Arabidopsis thaliana (Mouse-ear cress).